Consider the following 4034-residue polypeptide: Polyketide synthase-nonribosomal peptide synthetase ACE1 (4034 aa).

The 439-residue stretch at 10-448 (TEPIAIIGSG…GANAHVILES (439 aa)) folds into the Ketosynthase family 3 (KS3) domain. Catalysis depends on for beta-ketoacyl synthase activity residues Cys-183, His-322, and His-368. Residues 560 to 879 (VFTGQGAQWA…PYFGCLSRGT (320 aa)) form an acyl transferase region. An N-terminal hotdog fold region spans residues 951-1082 (NELLGTRLPD…GDLVVLLGEP (132 aa)). Positions 951-1257 (NELLGTRLPD…TKPLSPPSAA (307 aa)) constitute a PKS/mFAS DH domain. Positions 952-1252 (ELLGTRLPDD…LQGLHTKPLS (301 aa)) are dehydratase (DH) domain. Catalysis depends on His-983, which acts as the Proton acceptor; for dehydratase activity. A C-terminal hotdog fold region spans residues 1097 to 1257 (MKDIDEERFY…TKPLSPPSAA (161 aa)). The Proton donor; for dehydratase activity role is filled by Asp-1157. A methyltransferase (MT) domain region spans residues 1396–1594 (NMLNRFYSDA…SGADIVTPHH (199 aa)). The tract at residues 2144–2317 (TYWLVGLTGG…AGSSVEIGCI (174 aa)) is ketoreductase (KR)domain. The 82-residue stretch at 2424–2505 (KSSEEVLDIL…LLLEFVQGLI (82 aa)) folds into the Carrier 1 domain. Position 2465 is an O-(pantetheine 4'-phosphoryl)serine (Ser-2465). The segment at 2512 to 2598 (KLDGSDGADA…SPTTSASMAS (87 aa)) is disordered. A compositionally biased stretch (low complexity) spans 2556-2577 (PSGPASPTSPSSATASPGRSRS). The segment covering 2586–2598 (TPVSPTTSASMAS) has biased composition (polar residues). The tract at residues 2608–3037 (TVPVSFGQSR…ATSLNRPAIY (430 aa)) is condensation. The tract at residues 3073–3473 (KYATKFALRN…GGLIIEGRID (401 aa)) is adenylation. The 81-residue stretch at 3598–3678 (AELGSDQARM…AMTDLVLSDD (81 aa)) folds into the Carrier 2 domain. O-(pantetheine 4'-phosphoryl)serine is present on Ser-3638. The segment at 3719–3944 (LTGATGFLGR…DFVSVENVAA (226 aa)) is reductase-like.

Belongs to the NRP synthetase family.

It localises to the cytoplasm. It participates in secondary metabolite biosynthesis. Functionally, hybrid PKS-NRPS synthetase; part of the gene cluster that mediates the biosynthesis of a tyrosine-derived cytochalasan acting as a fungal signal recognized by resistant rice plants and leads to avirulence in Pi33 resistant rice cultivars. The first step in the pathway is catalyzed by the hybrid PKS-NRPS ACE1, assisted by the enoyl reductase RAP1, that are responsible for fusion of the tyrosine precursor and the polyketide backbone. The polyketide synthase module (PKS) of ACE1 is responsible for the synthesis of the polyketide backbone and the downstream nonribosomal peptide synthetase (NRPS) amidates the carboxyl end of the polyketide with the tyrosine precursor. Because ACE1 lacks a designated enoylreductase (ER) domain, the required activity is provided the enoyl reductase RAP1. Reduction by the hydrolyase ORFZ, followed by dehydration and intra-molecular Diels-Alder cyclization by the Diels-Alderase ORF3 then yield the required isoindolone-fused macrocycle. A number of oxidative steps catalyzed by the tailoring enzymes identified within the cluster, including cytochrome P450 monooxygenases CYP1 to CYP4, the FAD-linked oxidoreductase OXR2 and the short-chain dehydrogenase/reductase OXR1, are further required to afford the final cytochalasans that confer avirulence and which have still to be identified. The monooxygenase CYP1 has been shown to be a site-selective C-18 hydroxylase whereas the function of CYP3 is the site-selective epoxidation of the C-6/C-7 olefin that is present in some intermediate compounds. Finally, SYN2 and RAP2 are not required for avirulence in Pi33 resistant rice cultivars. The sequence is that of Polyketide synthase-nonribosomal peptide synthetase ACE1 from Pyricularia oryzae (strain 70-15 / ATCC MYA-4617 / FGSC 8958) (Rice blast fungus).